The sequence spans 492 residues: Probable proline dehydrogenase, mitochondrial (492 aa).

It belongs to the proline oxidase family. FAD serves as cofactor.

The protein localises to the mitochondrion. The catalysed reaction is L-proline + a quinone = (S)-1-pyrroline-5-carboxylate + a quinol + H(+). Converts proline to delta-1-pyrroline-5-carboxylate. The protein is Probable proline dehydrogenase, mitochondrial of Schizosaccharomyces pombe (strain 972 / ATCC 24843) (Fission yeast).